A 103-amino-acid polypeptide reads, in one-letter code: Large ribosomal subunit protein bL25 (103 aa).

It belongs to the bacterial ribosomal protein bL25 family. In terms of assembly, part of the 50S ribosomal subunit; part of the 5S rRNA/L5/L18/L25 subcomplex. Contacts the 5S rRNA. Binds to the 5S rRNA independently of L5 and L18.

This is one of the proteins that binds to the 5S RNA in the ribosome where it forms part of the central protuberance. The chain is Large ribosomal subunit protein bL25 from Blochmanniella floridana.